A 153-amino-acid polypeptide reads, in one-letter code: Arginine regulator (153 aa).

It belongs to the ArgR family.

Its subcellular location is the cytoplasm. The protein operates within amino-acid degradation; L-arginine degradation via ADI pathway. Regulates the transcription of the arc operon, involved in arginine catabolism. In Lactiplantibacillus plantarum (strain ATCC BAA-793 / NCIMB 8826 / WCFS1) (Lactobacillus plantarum), this protein is Arginine regulator (argR1).